A 624-amino-acid polypeptide reads, in one-letter code: Probable Xaa-Pro aminopeptidase P (624 aa).

Positions 421, 432, 530, and 544 each coordinate Mn(2+).

The protein belongs to the peptidase M24B family. Mn(2+) serves as cofactor.

The enzyme catalyses Release of any N-terminal amino acid, including proline, that is linked to proline, even from a dipeptide or tripeptide.. Its function is as follows. Catalyzes the removal of a penultimate prolyl residue from the N-termini of peptides. This is Probable Xaa-Pro aminopeptidase P (AMPP) from Arthroderma otae (strain ATCC MYA-4605 / CBS 113480) (Microsporum canis).